The sequence spans 129 residues: Phosphoribosyl-AMP cyclohydrolase (129 aa).

Position 85 (aspartate 85) interacts with Mg(2+). Cysteine 86 lines the Zn(2+) pocket. The Mg(2+) site is built by aspartate 87 and aspartate 89. Zn(2+) is bound by residues cysteine 102 and cysteine 109.

Belongs to the PRA-CH family. As to quaternary structure, homodimer. The cofactor is Mg(2+). Requires Zn(2+) as cofactor.

The protein resides in the cytoplasm. The enzyme catalyses 1-(5-phospho-beta-D-ribosyl)-5'-AMP + H2O = 1-(5-phospho-beta-D-ribosyl)-5-[(5-phospho-beta-D-ribosylamino)methylideneamino]imidazole-4-carboxamide. Its pathway is amino-acid biosynthesis; L-histidine biosynthesis; L-histidine from 5-phospho-alpha-D-ribose 1-diphosphate: step 3/9. Its function is as follows. Catalyzes the hydrolysis of the adenine ring of phosphoribosyl-AMP. The chain is Phosphoribosyl-AMP cyclohydrolase from Methanococcus maripaludis (strain C6 / ATCC BAA-1332).